Here is a 109-residue protein sequence, read N- to C-terminus: UPF0154 protein UPA3_0273 (109 aa).

The chain crosses the membrane as a helical span at residues Val42–Ile62.

It belongs to the UPF0154 family.

Its subcellular location is the cell membrane. The chain is UPF0154 protein UPA3_0273 from Ureaplasma parvum serovar 3 (strain ATCC 27815 / 27 / NCTC 11736).